Consider the following 513-residue polypeptide: ATP synthase subunit alpha (513 aa).

169-176 (GDRQTGKT) is an ATP binding site.

This sequence belongs to the ATPase alpha/beta chains family. F-type ATPases have 2 components, CF(1) - the catalytic core - and CF(0) - the membrane proton channel. CF(1) has five subunits: alpha(3), beta(3), gamma(1), delta(1), epsilon(1). CF(0) has three main subunits: a(1), b(2) and c(9-12). The alpha and beta chains form an alternating ring which encloses part of the gamma chain. CF(1) is attached to CF(0) by a central stalk formed by the gamma and epsilon chains, while a peripheral stalk is formed by the delta and b chains.

It localises to the cell inner membrane. It carries out the reaction ATP + H2O + 4 H(+)(in) = ADP + phosphate + 5 H(+)(out). In terms of biological role, produces ATP from ADP in the presence of a proton gradient across the membrane. The alpha chain is a regulatory subunit. The polypeptide is ATP synthase subunit alpha (Haemophilus influenzae (strain PittGG)).